A 487-amino-acid chain; its full sequence is METVQLRNPPRRQLKKLDEDSLTKQPEEVFDVLEKLGEGSYGSVYKAIHKETGQIVAIKQVPVESDLQEIIKEISIMQQCDSPHVVKYYGSYFKNTDLWIVMEYCGAGSVSDIIRLRNKTLTEDEIATILQSTLKGLEYLHFMRKIHRDIKAGNILLNTEGHAKLADFGVAGQLTDTMAKRNTVIGTPFWMAPEVIQEIGYNCVADIWSLGITAIEMAEGKPPYADIHPMRAIFMIPTNPPPTFRKPELWSDNFMDFVRQCLVKSPDQRATATQLLQHPFVKSAKGVSILRDLINEAMDVKLKRQEAQQREVDQDDEENSEEDELDSGTMVRAVGDDMGTVRVASTMSDEANTMIEHDDTLPSQLGTMVINAEDEEEEGTMKRRDETMQPAKPSFLEYFEQKEKENQISSFGKSVPGPLKNSADWKVPQDGDYEFLKSWTVEDLQKRLLALDPMMEQEIEEIRQKYQSKRQPILDAIEAKKRRQQNF.

N-acetylmethionine is present on Met-1. Thr-3 carries the post-translational modification Phosphothreonine. The Protein kinase domain occupies 30–281 (FDVLEKLGEG…ATQLLQHPFV (252 aa)). ATP is bound by residues 36–44 (LGEGSYGSV) and Lys-59. The active-site Proton acceptor is the Asp-149. Position 183 is a phosphothreonine; by autocatalysis (Thr-183). Ser-265 is subject to Phosphoserine. A coiled-coil region spans residues 290–310 (LRDLINEAMDVKLKRQEAQQR). Residues 305-338 (QEAQQREVDQDDEENSEEDELDSGTMVRAVGDDM) are disordered. The segment covering 313 to 326 (DQDDEENSEEDELD) has biased composition (acidic residues). At Ser-320 the chain carries Phosphoserine. Phosphothreonine is present on residues Thr-340 and Thr-367. At Thr-387 the chain carries Phosphothreonine; by PKB/AKT1. Phosphoserine is present on residues Ser-410 and Ser-414. The residue at position 433 (Tyr-433) is a Phosphotyrosine. The SARAH domain occupies 433-480 (YEFLKSWTVEDLQKRLLALDPMMEQEIEEIRQKYQSKRQPILDAIEAK).

It belongs to the protein kinase superfamily. STE Ser/Thr protein kinase family. STE20 subfamily. In terms of assembly, homodimer; mediated via the coiled-coil region. Interacts with NORE1, which inhibits autoactivation. Interacts with and stabilizes SAV1. Interacts with RASSF1. Interacts with FOXO3. Interacts with RASSF2 (via SARAH domain). Interacts with AR, PKB/AKT1, TNNI3 and SIRT1. Interacts with DLG5 (via PDZ domain 3). Interacts with MARK3 and SCRIB in the presence of DLG5. It depends on Mg(2+) as a cofactor. In terms of processing, autophosphorylated on serine and threonine residues. Phosphorylation at Thr-387 by PKB/AKT1, leads to inhibition of its: kinase activity, nuclear translocation and autophosphorylation at Thr-183. It also diminishes its cleavage by caspases and its ability to phosphorylate FOXO3. Proteolytically cleaved by caspase-3 during apoptosis at Asp-326 and Asp-349 resulting in a 37 kDa or a 39 kDa subunit respectively. The 39 kDa subunit is further cleaved into the 37 kDa form. Proteolytic cleavage results in kinase activation and nuclear translocation of the truncated form (MST1/N). It is less likely that cleavage at Asp-349 is a prerequisite for activation as this site is not conserved in the murine ortholog.

The protein resides in the cytoplasm. The protein localises to the nucleus. It carries out the reaction L-seryl-[protein] + ATP = O-phospho-L-seryl-[protein] + ADP + H(+). It catalyses the reaction L-threonyl-[protein] + ATP = O-phospho-L-threonyl-[protein] + ADP + H(+). Inhibited by the C-terminal non-catalytic region. Activated by caspase-cleavage. Full activation also requires homodimerization and autophosphorylation of Thr-183. Activated by RASSF1 which acts by preventing its dephosphorylation. Functionally, stress-activated, pro-apoptotic kinase which, following caspase-cleavage, enters the nucleus and induces chromatin condensation followed by internucleosomal DNA fragmentation. Key component of the Hippo signaling pathway which plays a pivotal role in organ size control and tumor suppression by restricting proliferation and promoting apoptosis. The core of this pathway is composed of a kinase cascade wherein STK3/MST2 and STK4/MST1, in complex with its regulatory protein SAV1, phosphorylates and activates LATS1/2 in complex with its regulatory protein MOB1, which in turn phosphorylates and inactivates YAP1 oncoprotein and WWTR1/TAZ. Phosphorylation of YAP1 by LATS2 inhibits its translocation into the nucleus to regulate cellular genes important for cell proliferation, cell death, and cell migration. STK3/MST2 and STK4/MST1 are required to repress proliferation of mature hepatocytes, to prevent activation of facultative adult liver stem cells (oval cells), and to inhibit tumor formation. Phosphorylates 'Ser-14' of histone H2B (H2BS14ph) during apoptosis. Phosphorylates FOXO3 upon oxidative stress, which results in its nuclear translocation and cell death initiation. Phosphorylates MOBKL1A, MOBKL1B and RASSF2. Phosphorylates TNNI3 (cardiac Tn-I) and alters its binding affinity to TNNC1 (cardiac Tn-C) and TNNT2 (cardiac Tn-T). Phosphorylates FOXO1 on 'Ser-212' and regulates its activation and stimulates transcription of PMAIP1 in a FOXO1-dependent manner. Phosphorylates SIRT1 and inhibits SIRT1-mediated p53/TP53 deacetylation, thereby promoting p53/TP53 dependent transcription and apoptosis upon DNA damage. Acts as an inhibitor of PKB/AKT1. Phosphorylates AR on 'Ser-650' and suppresses its activity by intersecting with PKB/AKT1 signaling and antagonizing formation of AR-chromatin complexes. In Lemur catta (Ring-tailed lemur), this protein is Serine/threonine-protein kinase 4 (STK4).